A 396-amino-acid chain; its full sequence is MIISAASDYRAAAQRILPPFLFHYMDGGAYSEYTLRRNVEDLSEVALRQRILKNMSDLSLETTLFNEKLSMPVALAPVGLCGMYARRGEVQAAKAADAHGIPFTLSTVSVCPIEEVAPAIKRPMWFQLYVLRDRGFMRNALERAKAAGCSTLVFTVDMPTPGARYRDAHSGMSGPNAAMRRYLQAVTHPQWAWDVGLNGRPHDLGNISAYLGKPTGLEDYIGWLGNNFDPSISWKDLEWIRDFWDGPMVIKGILDPEDARDAVRFGADGIVVSNHGGRQLDGVLSSARALPAIADAVKGDIAILADSGIRNGLDVVRMIALGADTVLLGRAFLYALATAGQAGVANLLNLIEKEMKVAMTLTGAKSISEITQDSLVQGLGKELPTALAPMAKGNAA.

The 380-residue stretch at 1 to 380 (MIISAASDYR…TQDSLVQGLG (380 aa)) folds into the FMN hydroxy acid dehydrogenase domain. Substrate is bound at residue Tyr24. 2 residues coordinate FMN: Ser106 and Gln127. Residue Tyr129 participates in substrate binding. Thr155 is a binding site for FMN. Substrate is bound at residue Arg164. Lys251 contributes to the FMN binding site. Residue His275 is the Proton acceptor of the active site. A substrate-binding site is contributed by Arg278. Residue 306-330 (DSGIRNGLDVVRMIALGADTVLLGR) coordinates FMN.

The protein belongs to the FMN-dependent alpha-hydroxy acid dehydrogenase family. It depends on FMN as a cofactor.

Its subcellular location is the cell inner membrane. It carries out the reaction (S)-lactate + A = pyruvate + AH2. Catalyzes the conversion of L-lactate to pyruvate. Is coupled to the respiratory chain. The chain is L-lactate dehydrogenase from Shigella flexneri serotype 5b (strain 8401).